The chain runs to 376 residues: Acetate kinase (376 aa).

Residue Asn7 coordinates Mg(2+). Lys14 contributes to the ATP binding site. Arg71 provides a ligand contact to substrate. Asp128 acts as the Proton donor/acceptor in catalysis. ATP is bound by residues 188–192, 262–264, and 310–314; these read HLGNG, DFR, and GVGEN. Mg(2+) is bound at residue Glu364.

The protein belongs to the acetokinase family. As to quaternary structure, homodimer. Requires Mg(2+) as cofactor. The cofactor is Mn(2+).

Its subcellular location is the cytoplasm. It catalyses the reaction acetate + ATP = acetyl phosphate + ADP. It participates in metabolic intermediate biosynthesis; acetyl-CoA biosynthesis; acetyl-CoA from acetate: step 1/2. In terms of biological role, catalyzes the formation of acetyl phosphate from acetate and ATP. Can also catalyze the reverse reaction. In Mycolicibacterium smegmatis (strain ATCC 700084 / mc(2)155) (Mycobacterium smegmatis), this protein is Acetate kinase.